Reading from the N-terminus, the 116-residue chain is UPF0482 protein ECA2253 (116 aa).

A signal peptide spans 1–31; sequence MNHYSFSSLIRALIPLSLVIVSAVWQPAALA.

Belongs to the UPF0482 family.

The polypeptide is UPF0482 protein ECA2253 (Pectobacterium atrosepticum (strain SCRI 1043 / ATCC BAA-672) (Erwinia carotovora subsp. atroseptica)).